The chain runs to 601 residues: MAYNITSLMTNFCLITTILSLTLSFKQNSDNNKITKYMRNAFIISLLPLIIYIDQQMDSSSSFTSTFNMISFNLLLGFEADMYCLTFFSIALYITWSIMQFSLWYMHEHNNTLFFKYLTMFLISMLFFLSANNLLQLILGWEGMGIMSFLLINWWHNRLEANSAAMQAIIYNRIGDTGLIIFMIWSALFTNSWNMKQIFILQNNSMDLWLPLLGIVLAATGKSAQFMLHPWLLSAMEGPTPVSALLHSSTMVVSGVFLLIRFYPMIKNSQMIISIILCLGAMTTLFAALCASSQTDIKKIIAFSTTSQLGLMTVTIGINQPQLAFLHMSTHAFFKALLFLCSASIIHTINNEQDIRKMGSLHLILPFTSSCTLISSLALMGMPYLSGFYSKDIILETLNMSYVNAWALLSTMLATALTSIYSTRLILLSMAMTPNINTLIFLKKDKNLFSPLIRLTLGSIIFGFIISTFFLPEKQPNFSIPFNSKILPTIMLILVSSLTLYFMNNHKFSHMPPLFFPSMSGYFPAIFHRLFSYYFLLFPKKVSSSLLDILWYETLGPKSISHNLSSSSSLFNKLSQGTINNYITIFVITILSSLLTSALYF.

17 helical membrane passes run isoleucine 5–phenylalanine 25, tyrosine 37–aspartate 54, tyrosine 83–tyrosine 105, threonine 112–leucine 129, leucine 134–histidine 156, isoleucine 169–phenylalanine 189, tryptophan 209–tryptophan 231, threonine 240–isoleucine 260, methionine 271–alanine 291, isoleucine 300–glutamine 320, leucine 323–alanine 343, leucine 363–proline 383, methionine 400–isoleucine 420, proline 451–leucine 471, phenylalanine 478–leucine 498, phenylalanine 508–histidine 528, and asparagine 581–phenylalanine 601.

This sequence belongs to the complex I subunit 5 family.

Its subcellular location is the mitochondrion inner membrane. It catalyses the reaction a ubiquinone + NADH + 5 H(+)(in) = a ubiquinol + NAD(+) + 4 H(+)(out). Functionally, core subunit of the mitochondrial membrane respiratory chain NADH dehydrogenase (Complex I) that is believed to belong to the minimal assembly required for catalysis. Complex I functions in the transfer of electrons from NADH to the respiratory chain. The immediate electron acceptor for the enzyme is believed to be ubiquinone. The protein is NADH-ubiquinone oxidoreductase chain 5 (MT-ND5) of Myxine glutinosa (Atlantic hagfish).